Reading from the N-terminus, the 672-residue chain is Iron-phytosiderophore transporter YSL15 (672 aa).

Residues 1-11 (MEHADADRTRV) are compositionally biased toward basic and acidic residues. The segment at 1–27 (MEHADADRTRVAPEIGSLHDEDAEADP) is disordered. 14 helical membrane passes run 47–67 (GVVA…KIAL), 70–90 (GLVP…LRGW), 115–135 (CAVA…LLGL), 158–178 (GIGW…LSLI), 218–238 (LHGF…QWFY), 279–299 (LVNL…WPLI), 325–345 (FLCI…VTGV), 390–410 (MAYS…PIMF), 418–438 (VIIA…GAGL), 450–470 (IALF…AGLV), 504–524 (VGEL…FMLF), 556–576 (ISAL…FAVL), 602–622 (FLVG…LFAW), and 630–650 (AAFM…IWTF).

It belongs to the YSL (TC 2.A.67.2) family. Expressed in root phloem and at low levels in the shoot companion cells.

The protein localises to the cell membrane. Involved in Fe(3+) uptake from the rhizosphere and phloem transport of iron. Plays an important role in iron homeostasis during the early stages of growth. Transports Fe(3+)-phytosiderophore, but not Fe(3+)- or Fe(2+)-nicotianamine. May not transport other chelated metals. The sequence is that of Iron-phytosiderophore transporter YSL15 (YSL15) from Oryza sativa subsp. japonica (Rice).